A 184-amino-acid polypeptide reads, in one-letter code: MSEMEKITIENIVASTSLAEHLDLSKIALALEGSEYEPEQFPGLIYRLQEPKTAVLIFRSGKVNCTGAKNLDDVKKTIDIIIDKLKKADIEVYDNPDIIVQNIVAVYDLESNLNLTDIAMSLGLENVEYEPEQFPGLVYRVEEPKVVLLLFGSGKVVCTGAKEENEIEQAVIKVKKDLQKVGLI.

2 tandem repeats follow at residues 9-85 (IENI…IDKL) and 100-178 (VQNI…KKDL).

This sequence belongs to the TBP family.

Functionally, general factor that plays a role in the activation of archaeal genes transcribed by RNA polymerase. Binds specifically to the TATA box promoter element which lies close to the position of transcription initiation. The polypeptide is TATA-box-binding protein (Picrophilus torridus (strain ATCC 700027 / DSM 9790 / JCM 10055 / NBRC 100828 / KAW 2/3)).